The following is a 471-amino-acid chain: Putative multidrug resistance protein MdtD (471 aa).

The Periplasmic portion of the chain corresponds to 1–11 (MTDLPDSTRWQ). A helical membrane pass occupies residues 12 to 32 (LWIVAFGFFMQSLDTTIVNTA). The Cytoplasmic segment spans residues 33–48 (LPSMAQSLGESPLHMH). The helical transmembrane segment at 49 to 69 (MVIVSYVLTVAVMLPASGWLA) threads the bilayer. At 70–76 (DKVGVRN) the chain is on the periplasmic side. A helical transmembrane segment spans residues 77-97 (IFFTAIVLFTLGSLFCALSGT). Residues 98-101 (LNEL) lie on the Cytoplasmic side of the membrane. Residues 102-124 (LLARALQGVGGAMMVPVGRLTVM) traverse the membrane as a helical segment. Over 125–137 (KIVPREQYMAAMT) the chain is Periplasmic. Residues 138–158 (FVTLPGQVGPLLGPALGGLLV) form a helical membrane-spanning segment. Residues 159-164 (EYASWH) are Cytoplasmic-facing. A helical membrane pass occupies residues 165-185 (WIFLINIPVGIIGAIATLLLM). Residues 186–196 (PNYTMQTRRFD) are Periplasmic-facing. A helical membrane pass occupies residues 197–217 (LSGFLLLAVGMAVLTLALDGS). The Cytoplasmic portion of the chain corresponds to 218–224 (KGTGLSP). A helical transmembrane segment spans residues 225–245 (LTIAGLVAVGVVALVLYLLHA). The Periplasmic portion of the chain corresponds to 246 to 262 (RNNNRALFSLKLFRTRT). The chain crosses the membrane as a helical span at residues 263–283 (FSLGLAGSFAGRIGSGMLPFM). Topologically, residues 284–285 (TP) are cytoplasmic. A helical transmembrane segment spans residues 286–306 (VFLQIGLGFSPFHAGLMMIPM). The Periplasmic portion of the chain corresponds to 307-341 (VLGSMGMKRIVVQVVNRFGYRRVLVATTLGLSLVT). A helical transmembrane segment spans residues 342–362 (LLFMTTALLGWYYVLPFVLFL). The Cytoplasmic segment spans residues 363-395 (QGMVNSTRFSSMNTLTLKDLPDNLASSGNSLLS). The chain crosses the membrane as a helical span at residues 396–416 (MIMQLSMSIGVTIAGLLLGLF). The Periplasmic segment spans residues 417–430 (GSQHVSVDSGTTQT). The chain crosses the membrane as a helical span at residues 431 to 451 (VFMYTWLSMALIIALPAFIFA). The Cytoplasmic portion of the chain corresponds to 452–471 (RVPNDTHQNVAISRRKRSAQ).

Belongs to the major facilitator superfamily. TCR/Tet family.

Its subcellular location is the cell inner membrane. The polypeptide is Putative multidrug resistance protein MdtD (Escherichia coli (strain K12 / MC4100 / BW2952)).